Reading from the N-terminus, the 201-residue chain is Protein tirC (201 aa).

The TIR domain maps to 52–186 (ERIKVFIVHG…YVWINYTEDL (135 aa)).

The protein is Protein tirC (tirC) of Dictyostelium discoideum (Social amoeba).